Consider the following 175-residue polypeptide: Large ribosomal subunit protein uL10 (175 aa).

The protein belongs to the universal ribosomal protein uL10 family. As to quaternary structure, part of the ribosomal stalk of the 50S ribosomal subunit. The N-terminus interacts with L11 and the large rRNA to form the base of the stalk. The C-terminus forms an elongated spine to which L12 dimers bind in a sequential fashion forming a multimeric L10(L12)X complex.

Forms part of the ribosomal stalk, playing a central role in the interaction of the ribosome with GTP-bound translation factors. This Psychrobacter sp. (strain PRwf-1) protein is Large ribosomal subunit protein uL10.